We begin with the raw amino-acid sequence, 354 residues long: S-adenosylmethionine:tRNA ribosyltransferase-isomerase (354 aa).

It belongs to the QueA family. In terms of assembly, monomer.

It localises to the cytoplasm. The enzyme catalyses 7-aminomethyl-7-carbaguanosine(34) in tRNA + S-adenosyl-L-methionine = epoxyqueuosine(34) in tRNA + adenine + L-methionine + 2 H(+). Its pathway is tRNA modification; tRNA-queuosine biosynthesis. Its function is as follows. Transfers and isomerizes the ribose moiety from AdoMet to the 7-aminomethyl group of 7-deazaguanine (preQ1-tRNA) to give epoxyqueuosine (oQ-tRNA). The chain is S-adenosylmethionine:tRNA ribosyltransferase-isomerase from Salmonella typhi.